The primary structure comprises 554 residues: MKIDFNTLFPSSTKEYISGTIYNNIKVGMRRIHINDNSESILTYDTGGPHTDQKIKIDINQGIEKIRLNWIVDRQDVEYHKRQEVNTNSEYAFPLQSNNILKANSNKPITQMYYARNNIITPEMEYVAIRENALRQKILSYKPTVMAPEITPEFVRQEIASGRAIIPANVNHPESEPMIIGKNFLVKINANIGNSVVSSSIEDELQKMIYAIIYGADTVMDLSTGNNIHNIREWIIRNSPVPIGTVPIYQALNKVNGVVGDLDFNIFKKTLIEQAEQGVDYFTIHAGVLKNYIDYTDNRLTGIVSRGGAIMAHWCTIHNKENFLYTNFEEICDIMKHYDITFSLGDGLRPGSIADANDTAQFLELKTLGELTDIAWKHDCQVMIEGPGHVPMHLIKENVEKQVHFCKEAPFYTLGPLTTDIAPGYDHITSAIGAAIIGWYGTSMLCYVTPKEHLGLPNIQDVKDGVIAYKIAAHAADLAKGNPSAYIRDYALSYARFNFKWYDQFNLSLDPETAKSLHDESLPSENAKSAHFCSMCGPKFCSMKLTHQIKSIEE.

Substrate contacts are provided by residues Asn-191, Met-220, Tyr-249, His-285, 305 to 307 (SRG), 346 to 349 (DGLR), and Glu-385. Zn(2+) is bound at residue His-389. Position 412 (Tyr-412) interacts with substrate. His-453 is a Zn(2+) binding site. 3 residues coordinate [4Fe-4S] cluster: Cys-533, Cys-536, and Cys-541.

The protein belongs to the ThiC family. Homodimer. Requires [4Fe-4S] cluster as cofactor.

The enzyme catalyses 5-amino-1-(5-phospho-beta-D-ribosyl)imidazole + S-adenosyl-L-methionine = 4-amino-2-methyl-5-(phosphooxymethyl)pyrimidine + CO + 5'-deoxyadenosine + formate + L-methionine + 3 H(+). It participates in cofactor biosynthesis; thiamine diphosphate biosynthesis. In terms of biological role, catalyzes the synthesis of the hydroxymethylpyrimidine phosphate (HMP-P) moiety of thiamine from aminoimidazole ribotide (AIR) in a radical S-adenosyl-L-methionine (SAM)-dependent reaction. The polypeptide is Phosphomethylpyrimidine synthase (Ehrlichia chaffeensis (strain ATCC CRL-10679 / Arkansas)).